Consider the following 295-residue polypeptide: Phosphoribosylaminoimidazole-succinocarboxamide synthase (295 aa).

Belongs to the SAICAR synthetase family.

The catalysed reaction is 5-amino-1-(5-phospho-D-ribosyl)imidazole-4-carboxylate + L-aspartate + ATP = (2S)-2-[5-amino-1-(5-phospho-beta-D-ribosyl)imidazole-4-carboxamido]succinate + ADP + phosphate + 2 H(+). The protein operates within purine metabolism; IMP biosynthesis via de novo pathway; 5-amino-1-(5-phospho-D-ribosyl)imidazole-4-carboxamide from 5-amino-1-(5-phospho-D-ribosyl)imidazole-4-carboxylate: step 1/2. The polypeptide is Phosphoribosylaminoimidazole-succinocarboxamide synthase (Nitrosomonas europaea (strain ATCC 19718 / CIP 103999 / KCTC 2705 / NBRC 14298)).